We begin with the raw amino-acid sequence, 366 residues long: tRNA/tmRNA (uracil-C(5))-methyltransferase (366 aa).

S-adenosyl-L-methionine-binding residues include glutamine 190, tyrosine 218, asparagine 223, glutamate 239, and aspartate 299. Residue cysteine 324 is the Nucleophile of the active site. Residue glutamate 358 is the Proton acceptor of the active site.

Belongs to the class I-like SAM-binding methyltransferase superfamily. RNA M5U methyltransferase family. TrmA subfamily.

The catalysed reaction is uridine(54) in tRNA + S-adenosyl-L-methionine = 5-methyluridine(54) in tRNA + S-adenosyl-L-homocysteine + H(+). The enzyme catalyses uridine(341) in tmRNA + S-adenosyl-L-methionine = 5-methyluridine(341) in tmRNA + S-adenosyl-L-homocysteine + H(+). Its function is as follows. Dual-specificity methyltransferase that catalyzes the formation of 5-methyluridine at position 54 (m5U54) in all tRNAs, and that of position 341 (m5U341) in tmRNA (transfer-mRNA). In Escherichia coli O6:H1 (strain CFT073 / ATCC 700928 / UPEC), this protein is tRNA/tmRNA (uracil-C(5))-methyltransferase.